Consider the following 861-residue polypeptide: Probable alpha,alpha-trehalose-phosphate synthase [UDP-forming] 10 (861 aa).

Serine 5 carries the phosphoserine modification. Threonine 32 bears the Phosphothreonine mark. The segment at 59 to 546 (ERKIIVANFL…ARSFSQDLER (488 aa)) is glycosyltransferase.

The protein in the N-terminal section; belongs to the glycosyltransferase 20 family. This sequence in the C-terminal section; belongs to the trehalose phosphatase family.

It carries out the reaction D-glucose 6-phosphate + UDP-alpha-D-glucose = alpha,alpha-trehalose 6-phosphate + UDP + H(+). This is Probable alpha,alpha-trehalose-phosphate synthase [UDP-forming] 10 (TPS10) from Arabidopsis thaliana (Mouse-ear cress).